Consider the following 244-residue polypeptide: uncharacterized protein (244 aa).

Residues 1–17 (MVLHVITALLSIGLCYG) form the signal peptide.

As to expression, component of the acid-soluble and acid-insoluble organic matrix of prismatic shell layers (at protein level).

The protein localises to the secreted. This is an uncharacterized protein from Haliotis asinina (Donkey's ear abalone).